Here is a 550-residue protein sequence, read N- to C-terminus: Chaperonin GroEL (550 aa).

Residues 30 to 33 (TLGP), K51, 87 to 91 (DGTTT), G415, and D495 each bind ATP.

This sequence belongs to the chaperonin (HSP60) family. As to quaternary structure, forms a cylinder of 14 subunits composed of two heptameric rings stacked back-to-back. Interacts with the co-chaperonin GroES.

It localises to the cytoplasm. The catalysed reaction is ATP + H2O + a folded polypeptide = ADP + phosphate + an unfolded polypeptide.. Together with its co-chaperonin GroES, plays an essential role in assisting protein folding. The GroEL-GroES system forms a nano-cage that allows encapsulation of the non-native substrate proteins and provides a physical environment optimized to promote and accelerate protein folding. The chain is Chaperonin GroEL from Shewanella woodyi (strain ATCC 51908 / MS32).